Here is a 235-residue protein sequence, read N- to C-terminus: Carboxy-S-adenosyl-L-methionine synthase (235 aa).

S-adenosyl-L-methionine is bound by residues Tyr-35, 60–62, 83–84, Asn-124, and Arg-191; these read GCS and DN.

Belongs to the class I-like SAM-binding methyltransferase superfamily. Cx-SAM synthase family. As to quaternary structure, homodimer.

The enzyme catalyses prephenate + S-adenosyl-L-methionine = carboxy-S-adenosyl-L-methionine + 3-phenylpyruvate + H2O. Functionally, catalyzes the conversion of S-adenosyl-L-methionine (SAM) to carboxy-S-adenosyl-L-methionine (Cx-SAM). This chain is Carboxy-S-adenosyl-L-methionine synthase, found in Campylobacter jejuni subsp. jejuni serotype O:2 (strain ATCC 700819 / NCTC 11168).